The chain runs to 139 residues: ATP synthase epsilon chain (139 aa).

Belongs to the ATPase epsilon chain family. As to quaternary structure, F-type ATPases have 2 components, CF(1) - the catalytic core - and CF(0) - the membrane proton channel. CF(1) has five subunits: alpha(3), beta(3), gamma(1), delta(1), epsilon(1). CF(0) has three main subunits: a, b and c.

Its subcellular location is the cell inner membrane. Its function is as follows. Produces ATP from ADP in the presence of a proton gradient across the membrane. This is ATP synthase epsilon chain from Acinetobacter baumannii (strain AB307-0294).